Consider the following 397-residue polypeptide: Probable sugar efflux transporter (397 aa).

12 helical membrane-spanning segments follow: residues 15-35 (VVTLAIAAFIFNTTEFVPVGL), 50-70 (VGIMLTIYAWVVALMSLPFML), 81-101 (LICLFVLFIASHVLSFLAWNF), 103-123 (VLVISRIGIAFAHAVFWSITA), 136-156 (AQALSLIATGTALAMVLGLPI), 169-189 (TFFAIGIGALITLVCLIKLLP), 209-229 (PALMSIYLLTVVVVTAHYTAY), 246-266 (FATVLLLILGGAGIIGSVVFG), 275-295 (PLISIAIMLLVICLMLLLPAA), 301-321 (LAVLSIFWGIAIMVIGLGMQV), 333-353 (VAMALFSGIFNIGIGAGALVG), and 364-384 (TIGYVGAVPALAALVWSIIIF).

This sequence belongs to the major facilitator superfamily. SotB (TC 2.A.1.2) family.

The protein resides in the cell inner membrane. Functionally, involved in the efflux of sugars. The physiological role may be the reduction of the intracellular concentration of toxic sugars or sugar metabolites. This chain is Probable sugar efflux transporter, found in Citrobacter koseri (strain ATCC BAA-895 / CDC 4225-83 / SGSC4696).